A 428-amino-acid chain; its full sequence is Serine--tRNA ligase (428 aa).

Residue 231 to 233 (TSE) coordinates L-serine. ATP contacts are provided by residues 262 to 264 (RRE) and valine 278. Glutamate 285 serves as a coordination point for L-serine. 349-352 (ELTS) contributes to the ATP binding site. Residue threonine 384 coordinates L-serine.

It belongs to the class-II aminoacyl-tRNA synthetase family. Type-1 seryl-tRNA synthetase subfamily. In terms of assembly, homodimer. The tRNA molecule binds across the dimer.

It localises to the cytoplasm. The catalysed reaction is tRNA(Ser) + L-serine + ATP = L-seryl-tRNA(Ser) + AMP + diphosphate + H(+). It catalyses the reaction tRNA(Sec) + L-serine + ATP = L-seryl-tRNA(Sec) + AMP + diphosphate + H(+). Its pathway is aminoacyl-tRNA biosynthesis; selenocysteinyl-tRNA(Sec) biosynthesis; L-seryl-tRNA(Sec) from L-serine and tRNA(Sec): step 1/1. In terms of biological role, catalyzes the attachment of serine to tRNA(Ser). Is also able to aminoacylate tRNA(Sec) with serine, to form the misacylated tRNA L-seryl-tRNA(Sec), which will be further converted into selenocysteinyl-tRNA(Sec). The chain is Serine--tRNA ligase from Bifidobacterium longum subsp. infantis (strain ATCC 15697 / DSM 20088 / JCM 1222 / NCTC 11817 / S12).